Consider the following 441-residue polypeptide: tRNA modification GTPase MnmE (441 aa).

The (6S)-5-formyl-5,6,7,8-tetrahydrofolate site is built by Arg22, Glu80, and Lys118. Residues 213–366 (GIYIAIVGEP…LLNLIKQRVE (154 aa)) enclose the TrmE-type G domain. GTP is bound by residues 223–228 (NSGKST), 242–248 (SEYAGTT), and 267–270 (DTAG). Mg(2+) is bound by residues Ser227 and Thr248. Lys441 lines the (6S)-5-formyl-5,6,7,8-tetrahydrofolate pocket.

Belongs to the TRAFAC class TrmE-Era-EngA-EngB-Septin-like GTPase superfamily. TrmE GTPase family. As to quaternary structure, homodimer. Heterotetramer of two MnmE and two MnmG subunits. Requires K(+) as cofactor.

It localises to the cytoplasm. Functionally, exhibits a very high intrinsic GTPase hydrolysis rate. Involved in the addition of a carboxymethylaminomethyl (cmnm) group at the wobble position (U34) of certain tRNAs, forming tRNA-cmnm(5)s(2)U34. The sequence is that of tRNA modification GTPase MnmE from Ehrlichia canis (strain Jake).